We begin with the raw amino-acid sequence, 544 residues long: Phosphoenolpyruvate carboxykinase (ATP) (544 aa).

Position 246–253 (246–253 (GLSGTGKT)) interacts with ATP.

Belongs to the phosphoenolpyruvate carboxykinase (ATP) family.

It carries out the reaction oxaloacetate + ATP = phosphoenolpyruvate + ADP + CO2. Its pathway is carbohydrate biosynthesis; gluconeogenesis. This Candida glabrata (strain ATCC 2001 / BCRC 20586 / JCM 3761 / NBRC 0622 / NRRL Y-65 / CBS 138) (Yeast) protein is Phosphoenolpyruvate carboxykinase (ATP) (PCK1).